We begin with the raw amino-acid sequence, 152 residues long: Transcriptional regulator MraZ (152 aa).

SpoVT-AbrB domains are found at residues 5–52 (AQAI…PLKE) and 81–124 (ATEC…SETE).

It belongs to the MraZ family. In terms of assembly, forms oligomers.

It is found in the cytoplasm. It localises to the nucleoid. This chain is Transcriptional regulator MraZ, found in Mannheimia succiniciproducens (strain KCTC 0769BP / MBEL55E).